Here is a 477-residue protein sequence, read N- to C-terminus: MQKHGTNEGALWGGRFSGGPSEAMFALSVSTHFDWVLAPYDVLASKAHARVLNKAKLLSDSDLETMLGGLDKLGKAVASGEFKPLPTDEDVHGAMERGLIDIVGPEVGGRLRAGRSRNDQVATLFRMWVRDAVRSVALQVTELVDALAYQATQHPRAIMPGKTHSQAAQPVLLAHQLLAHAQPLLRDIDRIRDLDKRLAISPYGSGALAGSSLHLDPEAIAQELGFDSACDNSIDGTSSRDFAAETAYVLAQIAIDMSRLAEEIIYWCTPEYGYVTLSDAWSTGSSIMPQKKNPDVAELTRGKTGRLIGNLSGLLATLKAQPLAYNRDLQEDKEPIVDSFAQLNLLLPAMTGLVSTLTFHEDRLLSLAPAGFTLATDLAEWMVRQGVPFREAHEASGACVRIAESRGVGLDELTDDELASVDVRLTPEVRTVLTVEGAVASRATRGGTAGVRVEEQRSRVESTSQSFKEWALTPVRK.

This sequence belongs to the lyase 1 family. Argininosuccinate lyase subfamily.

Its subcellular location is the cytoplasm. It catalyses the reaction 2-(N(omega)-L-arginino)succinate = fumarate + L-arginine. It participates in amino-acid biosynthesis; L-arginine biosynthesis; L-arginine from L-ornithine and carbamoyl phosphate: step 3/3. The polypeptide is Argininosuccinate lyase (Corynebacterium diphtheriae (strain ATCC 700971 / NCTC 13129 / Biotype gravis)).